Reading from the N-terminus, the 46-residue chain is Apamin (46 aa).

The signal sequence occupies residues 1–27; it reads MISMLRCIYLFLSVILITSYFVTPVMP. 2 disulfide bridges follow: C28–C38 and C30–C42. An essential for toxin activity region spans residues 40 to 41; the sequence is RR. H45 is subject to Histidine amide.

In terms of tissue distribution, expressed by the venom gland.

It is found in the secreted. In terms of biological role, toxin with unique selectivity to KCa2 channels. Potently blocks human, rat and mouse KCa2.2/KCNN2/SK2 channels (IC(50)=27-140 pM), and moderately blocks human and rat KCa2.3/KCNN3/SK3 channels (IC(50)=0.6-4 nM), and human (IC(50)=0.7-12 nM) and mouse (IC(50)=28 nM) KCa2.1/KCNN1/SK1 channels. Does not show any antimicrobial activity. In vivo, intracerebroventricular injection into rats of a dose of 1 ng results in neurodegeneration specifically in the Purkinje cells of the cerebellum, and induces seizures characterized by hypersensitivity to noise, loss of postural control, paroxystic jerking, and alternating periods of great agitation with tonic-clonic convulsions and periods of total prostration. When administered at high doses, exerts anti-inflammatory, anti-oxidative, anti-fibrotic and anti-apoptotic properties in several models of inflammatory disease, including gouty arthritis, atherosclerosis, atopic dermatitis and acute kidney injury. Down-regulates pro-inflammatory signaling pathways, such as the NF-kappaB and STAT3 pathways, probably by blocking SK channels such as KCa2.2/KCNN2/SK2 and/or KCa2.3/KCNN3/SK3 which are thought to be involved in promoting some inflammatory responses. For example in mouse and rat microglia cells, inhibits LPS-activated KCa2.2/KCNN2/SK2 channels and TLR4 expression leading to the down-regulation of the NF-kappaB, STAT, and MAPK/ERK signaling pathways and, as a consequence, decreases secretion of pro-inflammatory cytokines. This Apis mellifera (Honeybee) protein is Apamin.